The following is a 236-amino-acid chain: Baculoviral IAP repeat-containing protein 8 (236 aa).

One copy of the BIR repeat lies at 7–70; it reads RLITFGTWMY…KWYPGCKYLL (64 aa). The Zn(2+) site is built by Cys-39, Cys-42, His-59, and Cys-66. Residues 189-224 form an RING-type zinc finger; sequence CKICMDRHIAVVFIPCGHLVTCKQCAEAVDRCPMCS.

It belongs to the IAP family. In terms of assembly, binds to caspase-9. Testis specific in normal tissues.

The protein localises to the cytoplasm. Functionally, protects against apoptosis mediated by BAX. The protein is Baculoviral IAP repeat-containing protein 8 (BIRC8) of Homo sapiens (Human).